The following is a 392-amino-acid chain: L-serine phosphate decarboxylase (392 aa).

The required for catalytic activity stretch occupies residues 22 to 29 (NAGSHSPS). Residue Asn180 coordinates O-phospho-L-serine. Lys243 bears the N6-(pyridoxal phosphate)lysine mark. Arg354 and Arg368 together coordinate O-phospho-L-serine.

This sequence belongs to the class-II pyridoxal-phosphate-dependent aminotransferase family. In terms of assembly, homodimer. Pyridoxal 5'-phosphate serves as cofactor.

The enzyme catalyses O-phospho-L-serine + H(+) = phosphoethanolamine + CO2. It participates in cofactor biosynthesis. Its function is as follows. Pyridoxal phosphate (PLP)-dependent decarboxylase involved in the biosynthesis of norcobamides, cofactors in the tetrachloroethene reductive dehalogenase PceA of S.multivorans. Catalyzes the decarboxylation of L-serine O-phosphate to ethanolamine O-phosphate, the precursor for the linkage between the nucleotide loop and the corrin ring in norcobamide. Less active with L-threonine phosphate. No activity with L-serine or L-threonine. Has no aminotransferase activity as no production of L-glutamate with L-histidinol phosphate and 2-oxoglutarate as substrates. Complements growth defects in the S.enterica cobD deletion mutant, but of the cobamides, the norpseudo-vitamin B12 (norpseudo-B12) rather than the pseudo-B12 is produced in the mutant. However, addition of L-threonine phosphate to the culture minimal medium of the mutant results in formation of also the pseudo-B12, indicating the dual substrate specificity of this enzyme. The protein is L-serine phosphate decarboxylase of Sulfurospirillum multivorans (strain DM 12446 / JCM 15788 / NBRC 109480).